Consider the following 748-residue polypeptide: Polyribonucleotide nucleotidyltransferase (748 aa).

Mg(2+) is bound by residues Asp487 and Asp493. One can recognise a KH domain in the interval 554–613 (PSTTTIKIDKDKIRDIIGPSGKVIKEICETSGAKIDISDDGTVSVYASDRDKLKVALDKI). Residues 623–691 (GEIFNGTVVK…NKGKAKLTIK (69 aa)) form the S1 motif domain. Residues 693–733 (ADKDKSSNNTKPKTHVNNTKDNSEPEQRRDSSKKRAWNEDN) form a disordered region. Polar residues predominate over residues 699–712 (SNNTKPKTHVNNTK). A compositionally biased stretch (basic and acidic residues) spans 713-722 (DNSEPEQRRD).

It belongs to the polyribonucleotide nucleotidyltransferase family. It depends on Mg(2+) as a cofactor.

It is found in the cytoplasm. It carries out the reaction RNA(n+1) + phosphate = RNA(n) + a ribonucleoside 5'-diphosphate. Its function is as follows. Involved in mRNA degradation. Catalyzes the phosphorolysis of single-stranded polyribonucleotides processively in the 3'- to 5'-direction. The polypeptide is Polyribonucleotide nucleotidyltransferase (Rickettsia peacockii (strain Rustic)).